The following is a 425-amino-acid chain: Serine--tRNA ligase (425 aa).

233-235 (TAE) serves as a coordination point for L-serine. 264–266 (RRE) serves as a coordination point for ATP. Glu287 is a binding site for L-serine. Residue 351 to 354 (EVSS) coordinates ATP. Ser386 is a binding site for L-serine.

This sequence belongs to the class-II aminoacyl-tRNA synthetase family. Type-1 seryl-tRNA synthetase subfamily. As to quaternary structure, homodimer. The tRNA molecule binds across the dimer.

The protein resides in the cytoplasm. It carries out the reaction tRNA(Ser) + L-serine + ATP = L-seryl-tRNA(Ser) + AMP + diphosphate + H(+). The catalysed reaction is tRNA(Sec) + L-serine + ATP = L-seryl-tRNA(Sec) + AMP + diphosphate + H(+). Its pathway is aminoacyl-tRNA biosynthesis; selenocysteinyl-tRNA(Sec) biosynthesis; L-seryl-tRNA(Sec) from L-serine and tRNA(Sec): step 1/1. In terms of biological role, catalyzes the attachment of serine to tRNA(Ser). Is also able to aminoacylate tRNA(Sec) with serine, to form the misacylated tRNA L-seryl-tRNA(Sec), which will be further converted into selenocysteinyl-tRNA(Sec). This chain is Serine--tRNA ligase, found in Thermosipho melanesiensis (strain DSM 12029 / CIP 104789 / BI429).